The primary structure comprises 261 residues: Ribonuclease HII (261 aa).

The RNase H type-2 domain maps to 71–259; the sequence is KYIAGVDEVG…VKESKLHFDS (189 aa). 3 residues coordinate a divalent metal cation: Asp77, Glu78, and Asp169.

This sequence belongs to the RNase HII family. It depends on Mn(2+) as a cofactor. Mg(2+) is required as a cofactor.

The protein localises to the cytoplasm. It carries out the reaction Endonucleolytic cleavage to 5'-phosphomonoester.. In terms of biological role, endonuclease that specifically degrades the RNA of RNA-DNA hybrids. The polypeptide is Ribonuclease HII (Listeria monocytogenes serovar 1/2a (strain ATCC BAA-679 / EGD-e)).